Here is a 1262-residue protein sequence, read N- to C-terminus: Structural maintenance of chromosomes protein 1 (1262 aa).

The stretch at 171 to 497 forms a coiled coil; sequence SRSHEFQAEY…VAVVRQLSEA (327 aa). Positions 524 to 642 constitute an SMC hinge domain; the sequence is SVYGRLVDLC…ESQEDAKQLA (119 aa). A coiled-coil region spans residues 680-937; sequence KKWDEKVVKQ…RLESLLTKKQ (258 aa). The disordered stretch occupies residues 965–994; the sequence is EYEEDDGDDTASQSSQSATDGPSVSEEQIQ. A compositionally biased stretch (polar residues) spans 974–991; that stretch reads TASQSSQSATDGPSVSEE. Positions 1017–1086 form a coiled coil; it reads DGVRQMSNRL…QQFEKVKTDR (70 aa). The DA-box motif lies at 1148–1183; the sequence is LSGGEKTIAALALLFAVHGRNPAPFFVLDEIDAALD.

This sequence belongs to the SMC family. SMC1 subfamily. As to quaternary structure, component of the cohesin complex, composed of the smc-1 and smc-3 heterodimer attached via their SMC hinge domain, scc-1 which links them, and scc-3. Interacts with smc-3, scc-1, scc-3 and tim-1.

The protein localises to the nucleus. It localises to the chromosome. Involved in chromosome cohesion during cell cycle and in DNA repair. Required for chromosome segregation during mitosis. Central component of cohesin complex. The cohesin complex is required for the cohesion of sister chromatids after DNA replication. The cohesin complex apparently forms a large proteinaceous ring within which sister chromatids can be trapped. At anaphase, the complex is cleaved and dissociates from chromatin, allowing sister chromatids to segregate. This Caenorhabditis elegans protein is Structural maintenance of chromosomes protein 1.